The sequence spans 253 residues: 5'/3'-nucleotidase SurE (253 aa).

Aspartate 8, aspartate 9, serine 39, and asparagine 92 together coordinate a divalent metal cation.

The protein belongs to the SurE nucleotidase family. A divalent metal cation serves as cofactor.

It is found in the cytoplasm. It carries out the reaction a ribonucleoside 5'-phosphate + H2O = a ribonucleoside + phosphate. The catalysed reaction is a ribonucleoside 3'-phosphate + H2O = a ribonucleoside + phosphate. The enzyme catalyses [phosphate](n) + H2O = [phosphate](n-1) + phosphate + H(+). Its function is as follows. Nucleotidase with a broad substrate specificity as it can dephosphorylate various ribo- and deoxyribonucleoside 5'-monophosphates and ribonucleoside 3'-monophosphates with highest affinity to 3'-AMP. Also hydrolyzes polyphosphate (exopolyphosphatase activity) with the preference for short-chain-length substrates (P20-25). Might be involved in the regulation of dNTP and NTP pools, and in the turnover of 3'-mononucleotides produced by numerous intracellular RNases (T1, T2, and F) during the degradation of various RNAs. The sequence is that of 5'/3'-nucleotidase SurE from Salmonella paratyphi A (strain AKU_12601).